The following is a 123-amino-acid chain: Large ribosomal subunit protein bL12 (123 aa).

Belongs to the bacterial ribosomal protein bL12 family. As to quaternary structure, homodimer. Part of the ribosomal stalk of the 50S ribosomal subunit. Forms a multimeric L10(L12)X complex, where L10 forms an elongated spine to which 2 to 4 L12 dimers bind in a sequential fashion. Binds GTP-bound translation factors.

Its function is as follows. Forms part of the ribosomal stalk which helps the ribosome interact with GTP-bound translation factors. Is thus essential for accurate translation. The chain is Large ribosomal subunit protein bL12 from Clostridium botulinum (strain ATCC 19397 / Type A).